Here is a 595-residue protein sequence, read N- to C-terminus: Probable serine/threonine-protein kinase fhkC (595 aa).

The tract at residues 1 to 84 is disordered; that stretch reads MNSNKEETTA…MTEDNSKEED (84 aa). The segment covering 18 to 31 has biased composition (low complexity); the sequence is EEQQQQQQPQQQEQ. Residues 32–49 are compositionally biased toward polar residues; it reads INTTTASTTSNGENTASD. Over residues 50–70 the composition is skewed to low complexity; it reads NNNNSNNNNNNNTNNTNTNNN. The 55-residue stretch at 116–170 folds into the FHA domain; sequence IILGRSKGVCNYTFTSPTVSGKHCKIYRDPTVKSRNVAFVDDTSTNGTFINNEVI. In terms of domain architecture, Protein kinase spans 218–479; it reads YDLREVLGTG…IDQALNHPWF (262 aa). Residues 224–232 and Lys247 each bind ATP; that span reads LGTGNFASV. The active-site Proton acceptor is Asp342. The residue at position 377 (Thr377) is a Phosphothreonine; by autocatalysis. A disordered region spans residues 494 to 595; that stretch reads KLEFPPPSTN…DEHEQKKVKN (102 aa). Residues 508–520 are compositionally biased toward polar residues; sequence PTPNTTSSNSQLV. Residues 530-567 show a composition bias toward low complexity; sequence DNTTDNNNNNNNNNNNNNNNNNNNTTNNSNNIDNNNGN. Residues 585–595 are compositionally biased toward basic and acidic residues; it reads NDEHEQKKVKN.

Belongs to the protein kinase superfamily. CAMK Ser/Thr protein kinase family. CHK2 subfamily.

The catalysed reaction is L-seryl-[protein] + ATP = O-phospho-L-seryl-[protein] + ADP + H(+). It carries out the reaction L-threonyl-[protein] + ATP = O-phospho-L-threonyl-[protein] + ADP + H(+). This chain is Probable serine/threonine-protein kinase fhkC (fhkC), found in Dictyostelium discoideum (Social amoeba).